The sequence spans 111 residues: Small ribosomal subunit protein bS16 (111 aa).

The protein belongs to the bacterial ribosomal protein bS16 family.

This Rickettsia felis (strain ATCC VR-1525 / URRWXCal2) (Rickettsia azadi) protein is Small ribosomal subunit protein bS16.